The following is a 229-amino-acid chain: Probable transmembrane reductase CYB561D1 (229 aa).

Residues 1-24 lie on the Cytoplasmic side of the membrane; it reads MQPLEVGLVPAPAGEPRLTRWLRR. Residues 22-224 enclose the Cytochrome b561 domain; it reads LRRGSGILAH…HQISRSYLPR (203 aa). Residues 25-45 traverse the membrane as a helical segment; that stretch reads GSGILAHLVALGFTIFLTALS. Residues 46 to 53 lie on the Lumenal side of the membrane; it reads RPGTSLFS. A helical membrane pass occupies residues 54–74; sequence WHPVFMALAFCLCMAEAILLF. Residue H55 coordinates heme b. Residues 75–91 are Cytoplasmic-facing; sequence SPEHSLFFFCSRKARIR. Residues 92-112 traverse the membrane as a helical segment; the sequence is LHWAGQTLAILCAALGLGFII. Positions 93 and 127 each coordinate heme b. Residues 113 to 128 are Lumenal-facing; sequence SSRTRSELPHLVSWHS. A helical transmembrane segment spans residues 129–149; it reads WVGALTLLATAVQALCGLCLL. The Cytoplasmic portion of the chain corresponds to 150 to 169; that stretch reads CPRAARVSRVARLKLYHLTC. A heme b-binding site is contributed by H166. The helical transmembrane segment at 170–190 threads the bilayer; that stretch reads GLVVYLMATVTVLLGMYSVWF. Residues 191-193 lie on the Lumenal side of the membrane; that stretch reads QAQ. A helical membrane pass occupies residues 194-214; sequence IKGAAWYLCLALPVYPALVIM. Over 215–229 the chain is Cytoplasmic; it reads HQISRSYLPRKKMEM.

Heme b is required as a cofactor.

The protein localises to the membrane. It catalyses the reaction monodehydro-L-ascorbate radical(out) + L-ascorbate(in) = monodehydro-L-ascorbate radical(in) + L-ascorbate(out). The catalysed reaction is Fe(3+)(out) + L-ascorbate(in) = monodehydro-L-ascorbate radical(in) + Fe(2+)(out) + H(+). Probable transmembrane reductase that may use ascorbate as an electron donor and transfer electrons across membranes to reduce monodehydro-L-ascorbate radical and iron cations Fe(3+) in another cellular compartment. The chain is Probable transmembrane reductase CYB561D1 from Homo sapiens (Human).